Consider the following 220-residue polypeptide: Vesicle-associated membrane protein 7 (220 aa).

A2 carries the post-translational modification N-acetylalanine. Topologically, residues 2–188 (AILFAVVARG…ARAMCVKNVK (187 aa)) are cytoplasmic. Positions 7 to 110 (VVARGTTILA…AMNSEFSSVL (104 aa)) constitute a Longin domain. One can recognise a v-SNARE coiled-coil homology domain in the interval 125 to 185 (RVTETQAQVD…RNLARAMCVK (61 aa)). A phosphoserine mark is found at S167 and S168. Residues 189–209 (LTAIIVVVSIVFIYIIVSPLC) form a helical; Anchor for type IV membrane protein membrane-spanning segment. The Vesicular segment spans residues 210 to 220 (GGFTWPSCVKK).

The protein belongs to the synaptobrevin family. May interact with STX17. Component of the SNARE complex composed of STX4, SNAP23 and VAMP7 that binds SYT7 during lysosomal exocytosis. Component of the SNARE complex composed of STX7, STX8, VAMP7 and VTI1B that is required for heterotypic fusion of late endosomes with lysosomes. Interacts with PICALM. Interacts with RAB21. In terms of tissue distribution, expressed in brain, kidney, liver, lung, spleen and thymus. Not expressed in heart and skeletal muscle.

Its subcellular location is the cytoplasmic vesicle. The protein localises to the secretory vesicle membrane. It is found in the golgi apparatus. It localises to the trans-Golgi network membrane. The protein resides in the late endosome membrane. Its subcellular location is the lysosome membrane. The protein localises to the endoplasmic reticulum membrane. It is found in the phagosome membrane. It localises to the synapse. The protein resides in the synaptosome. Its function is as follows. Involved in the targeting and/or fusion of transport vesicles to their target membrane during transport of proteins from the early endosome to the lysosome. Required for heterotypic fusion of late endosomes with lysosomes and homotypic lysosomal fusion. Required for calcium regulated lysosomal exocytosis. Involved in the export of chylomicrons from the endoplasmic reticulum to the cis Golgi. Required for exocytosis of mediators during eosinophil and neutrophil degranulation, and target cell killing by natural killer cells. Required for focal exocytosis of late endocytic vesicles during phagosome formation. This Rattus norvegicus (Rat) protein is Vesicle-associated membrane protein 7 (Vamp7).